The sequence spans 385 residues: tRNA(Met) cytidine acetate ligase (385 aa).

ATP-binding positions include V7 to L20, G101, N153, and R178.

This sequence belongs to the TmcAL family.

It localises to the cytoplasm. The enzyme catalyses cytidine(34) in elongator tRNA(Met) + acetate + ATP = N(4)-acetylcytidine(34) in elongator tRNA(Met) + AMP + diphosphate. In terms of biological role, catalyzes the formation of N(4)-acetylcytidine (ac(4)C) at the wobble position of elongator tRNA(Met), using acetate and ATP as substrates. First activates an acetate ion to form acetyladenylate (Ac-AMP) and then transfers the acetyl group to tRNA to form ac(4)C34. This Lactobacillus gasseri (strain ATCC 33323 / DSM 20243 / BCRC 14619 / CIP 102991 / JCM 1131 / KCTC 3163 / NCIMB 11718 / NCTC 13722 / AM63) protein is tRNA(Met) cytidine acetate ligase.